A 207-amino-acid chain; its full sequence is Peptidyl-tRNA hydrolase (207 aa).

Y19 is a binding site for tRNA. H24 functions as the Proton acceptor in the catalytic mechanism. TRNA-binding residues include F70, N72, and N118.

This sequence belongs to the PTH family. Monomer.

The protein resides in the cytoplasm. The enzyme catalyses an N-acyl-L-alpha-aminoacyl-tRNA + H2O = an N-acyl-L-amino acid + a tRNA + H(+). In terms of biological role, hydrolyzes ribosome-free peptidyl-tRNAs (with 1 or more amino acids incorporated), which drop off the ribosome during protein synthesis, or as a result of ribosome stalling. Catalyzes the release of premature peptidyl moieties from peptidyl-tRNA molecules trapped in stalled 50S ribosomal subunits, and thus maintains levels of free tRNAs and 50S ribosomes. This chain is Peptidyl-tRNA hydrolase, found in Synechococcus sp. (strain CC9311).